Reading from the N-terminus, the 154-residue chain is 3-hydroxyacyl-[acyl-carrier-protein] dehydratase FabZ (154 aa).

Histidine 55 is a catalytic residue.

It belongs to the thioester dehydratase family. FabZ subfamily.

Its subcellular location is the cytoplasm. It carries out the reaction a (3R)-hydroxyacyl-[ACP] = a (2E)-enoyl-[ACP] + H2O. In terms of biological role, involved in unsaturated fatty acids biosynthesis. Catalyzes the dehydration of short chain beta-hydroxyacyl-ACPs and long chain saturated and unsaturated beta-hydroxyacyl-ACPs. The protein is 3-hydroxyacyl-[acyl-carrier-protein] dehydratase FabZ of Nitratidesulfovibrio vulgaris (strain ATCC 29579 / DSM 644 / CCUG 34227 / NCIMB 8303 / VKM B-1760 / Hildenborough) (Desulfovibrio vulgaris).